We begin with the raw amino-acid sequence, 232 residues long: Dof zinc finger protein DOF4.3 (232 aa).

The segment at 25-79 (RVCARCDSDNTKFCYYNNYSEFQPRYFCKNCRRYWTHGGALRNVPIGGSSRAKRT) adopts a Dof-type zinc-finger fold. 4 residues coordinate Zn(2+): cysteine 27, cysteine 30, cysteine 52, and cysteine 55.

It is found in the nucleus. Transcription factor that binds specifically to a 5'-AA[AG]G-3' consensus core sequence. In Arabidopsis thaliana (Mouse-ear cress), this protein is Dof zinc finger protein DOF4.3 (DOF4.3).